A 258-amino-acid chain; its full sequence is Regulatory protein RecX (258 aa).

This sequence belongs to the RecX family.

It is found in the cytoplasm. Modulates RecA activity. This is Regulatory protein RecX from Streptococcus pneumoniae (strain 70585).